Here is a 221-residue protein sequence, read N- to C-terminus: GTP cyclohydrolase III (221 aa).

The protein belongs to the archaeal-type GTP cyclohydrolase family.

The enzyme catalyses GTP + 3 H2O = 2-amino-5-formylamino-6-(5-phospho-D-ribosylamino)pyrimidin-4(3H)-one + 2 phosphate + 2 H(+). In terms of biological role, catalyzes the formation of 2-amino-5-formylamino-6-ribofuranosylamino-4(3H)-pyrimidinone ribonucleotide monophosphate and inorganic phosphate from GTP. Also has an independent pyrophosphate phosphohydrolase activity. The sequence is that of GTP cyclohydrolase III from Pyrobaculum aerophilum (strain ATCC 51768 / DSM 7523 / JCM 9630 / CIP 104966 / NBRC 100827 / IM2).